A 404-amino-acid chain; its full sequence is Argininosuccinate synthase (404 aa).

Residues 10–18 (AYSGGVDTS) and A38 contribute to the ATP site. Y89 lines the L-citrulline pocket. Residue G119 coordinates ATP. Residues T121, N125, and D126 each coordinate L-aspartate. An L-citrulline-binding site is contributed by N125. L-citrulline is bound by residues R129, S177, S186, E262, and Y274.

The protein belongs to the argininosuccinate synthase family. Type 1 subfamily. As to quaternary structure, homotetramer.

The protein localises to the cytoplasm. It catalyses the reaction L-citrulline + L-aspartate + ATP = 2-(N(omega)-L-arginino)succinate + AMP + diphosphate + H(+). It functions in the pathway amino-acid biosynthesis; L-arginine biosynthesis; L-arginine from L-ornithine and carbamoyl phosphate: step 2/3. This is Argininosuccinate synthase from Prochlorococcus marinus (strain MIT 9215).